We begin with the raw amino-acid sequence, 117 residues long: Glycoprotein hormones alpha chain (117 aa).

The N-terminal stretch at 1–23 is a signal peptide; that stretch reads MGSVKSAGLSLLLLSFLLYVADS. Cystine bridges form between C34/C57, C37/C86, C54/C107, C58/C109, and C85/C112. N-linked (GlcNAc...) asparagine glycosylation is found at N78 and N103.

It belongs to the glycoprotein hormones subunit alpha family. As to quaternary structure, heterodimer. Glycoprotein hormones are heterodimers composed of a common alpha chain described here and a unique beta chain which confers their biological specificity to the different hormones.

Its subcellular location is the secreted. Functionally, shared alpha chain of heterodimeric glycoprotein hormones. These hormones bind specific receptors on target cells that in turn activate downstream signaling pathways. Involved in gametogenesis and steroidogenesis. In Acanthopagrus latus (Yellowfin seabream), this protein is Glycoprotein hormones alpha chain (cga).